Here is a 272-residue protein sequence, read N- to C-terminus: Ethanolamine ammonia-lyase small subunit (272 aa).

Residues Val161, Glu182, and Cys211 each coordinate adenosylcob(III)alamin.

Belongs to the EutC family. In terms of assembly, the basic unit is a heterodimer which dimerizes to form tetramers. The heterotetramers trimerize; 6 large subunits form a core ring with 6 small subunits projecting outwards. The cofactor is adenosylcob(III)alamin.

The protein resides in the bacterial microcompartment. The catalysed reaction is ethanolamine = acetaldehyde + NH4(+). The protein operates within amine and polyamine degradation; ethanolamine degradation. In terms of biological role, catalyzes the deamination of various vicinal amino-alcohols to oxo compounds. Allows this organism to utilize ethanolamine as the sole source of nitrogen and carbon in the presence of external vitamin B12. This chain is Ethanolamine ammonia-lyase small subunit, found in Pseudomonas putida (strain W619).